Here is a 52-residue protein sequence, read N- to C-terminus: UPF0181 protein NTHI1697 (52 aa).

It belongs to the UPF0181 family.

The protein is UPF0181 protein NTHI1697 of Haemophilus influenzae (strain 86-028NP).